The sequence spans 166 residues: MVVAGIDPGITHLGLGVVAVEGKGALKARLLHGEVVKTSPQEPAKERVGRIHARVLEVLHRFRPEAVAVEEQFFYRQNELAYKVGWALGAVLVAAFEAGVPVYAYGPMQVKQALAGHGHAAKEEVALMVRGILGLKEAPRPSHLADALAIALTHAFYARMGTAKPL.

Catalysis depends on residues Asp-7, Glu-70, and His-143. Mg(2+) is bound by residues Asp-7, Glu-70, and His-143.

Belongs to the RuvC family. Homodimer which binds Holliday junction (HJ) DNA. The HJ becomes 2-fold symmetrical on binding to RuvC with unstacked arms; it has a different conformation from HJ DNA in complex with RuvA. In the full resolvosome a probable DNA-RuvA(4)-RuvB(12)-RuvC(2) complex forms which resolves the HJ. Requires Mg(2+) as cofactor.

The protein resides in the cytoplasm. It carries out the reaction Endonucleolytic cleavage at a junction such as a reciprocal single-stranded crossover between two homologous DNA duplexes (Holliday junction).. Its function is as follows. The RuvA-RuvB-RuvC complex processes Holliday junction (HJ) DNA during genetic recombination and DNA repair. Endonuclease that resolves HJ intermediates. Cleaves cruciform DNA by making single-stranded nicks across the HJ at symmetrical positions within the homologous arms, yielding a 5'-phosphate and a 3'-hydroxyl group; requires a central core of homology in the junction. The consensus cleavage sequence is 5'-(A/T)TT(C/G)-3'. Cleavage occurs on the 3'-side of the TT dinucleotide at the point of strand exchange. HJ branch migration catalyzed by RuvA-RuvB allows RuvC to scan DNA until it finds its consensus sequence, where it cleaves and resolves the cruciform DNA. The protein is Crossover junction endodeoxyribonuclease RuvC of Thermus thermophilus (strain ATCC BAA-163 / DSM 7039 / HB27).